The sequence spans 188 residues: dCTP deaminase (188 aa).

Lysine 109–arginine 114 is a dCTP binding site. The active-site Proton donor/acceptor is glutamate 135. 3 residues coordinate dCTP: glutamine 154, tyrosine 168, and glutamine 178.

It belongs to the dCTP deaminase family. Homotrimer.

The enzyme catalyses dCTP + H2O + H(+) = dUTP + NH4(+). It functions in the pathway pyrimidine metabolism; dUMP biosynthesis; dUMP from dCTP (dUTP route): step 1/2. In terms of biological role, catalyzes the deamination of dCTP to dUTP. The protein is dCTP deaminase of Helicobacter acinonychis (strain Sheeba).